The chain runs to 118 residues: Phosphoribosyl-AMP cyclohydrolase (118 aa).

Aspartate 87 lines the Mg(2+) pocket. Cysteine 88 is a binding site for Zn(2+). Mg(2+) is bound by residues aspartate 89 and aspartate 91. Residues cysteine 104 and cysteine 111 each contribute to the Zn(2+) site.

This sequence belongs to the PRA-CH family. Homodimer. The cofactor is Mg(2+). Zn(2+) is required as a cofactor.

The protein localises to the cytoplasm. The enzyme catalyses 1-(5-phospho-beta-D-ribosyl)-5'-AMP + H2O = 1-(5-phospho-beta-D-ribosyl)-5-[(5-phospho-beta-D-ribosylamino)methylideneamino]imidazole-4-carboxamide. The protein operates within amino-acid biosynthesis; L-histidine biosynthesis; L-histidine from 5-phospho-alpha-D-ribose 1-diphosphate: step 3/9. In terms of biological role, catalyzes the hydrolysis of the adenine ring of phosphoribosyl-AMP. This Corynebacterium glutamicum (strain R) protein is Phosphoribosyl-AMP cyclohydrolase.